The primary structure comprises 602 residues: Prostaglandin G/H synthase 1 (602 aa).

The signal sequence occupies residues Met-1–Leu-26. The region spanning Pro-34–Thr-72 is the EGF-like domain. Intrachain disulfides connect Cys-38/Cys-49, Cys-39/Cys-161, Cys-43/Cys-59, and Cys-61/Cys-71. Asn-70, Asn-106, and Asn-146 each carry an N-linked (GlcNAc...) asparagine glycan. His-209 serves as the catalytic Proton acceptor. Tyr-387 acts as the For cyclooxygenase activity in catalysis. Residue His-390 participates in heme b binding. A disulfide bridge connects residues Cys-571 and Cys-577.

The protein belongs to the prostaglandin G/H synthase family. Homodimer. Heme b serves as cofactor.

The protein resides in the microsome membrane. Its subcellular location is the endoplasmic reticulum membrane. The catalysed reaction is (5Z,8Z,11Z,14Z)-eicosatetraenoate + AH2 + 2 O2 = prostaglandin H2 + A + H2O. It catalyses the reaction (5Z,8Z,11Z,14Z)-eicosatetraenoate + 2 O2 = prostaglandin G2. The enzyme catalyses prostaglandin G2 + AH2 = prostaglandin H2 + A + H2O. It carries out the reaction (9Z,12Z)-octadecadienoate + AH2 + O2 = (9R)-hydroxy-(10E,12Z)-octadecadienoate + A + H2O. The catalysed reaction is (9Z,12Z)-octadecadienoate + AH2 + O2 = (9S)-hydroxy-(10E,12Z)-octadecadienoate + A + H2O. It catalyses the reaction (9Z,12Z)-octadecadienoate + AH2 + O2 = (13S)-hydroxy-(9Z,11E)-octadecadienoate + A + H2O. The enzyme catalyses (9Z,12Z)-octadecadienoate + AH2 + O2 = (13R)-hydroxy-(9Z,11E)-octadecadienoate + A + H2O. Its pathway is lipid metabolism; prostaglandin biosynthesis. The cyclooxygenase activity is inhibited by nonsteroidal anti-inflammatory drugs (NSAIDs) including ibuprofen, flurbiprofen, ketoprofen, naproxen, flurbiprofen, anirolac, fenclofenac and diclofenac. Its function is as follows. Dual cyclooxygenase and peroxidase that plays an important role in the biosynthesis pathway of prostanoids, a class of C20 oxylipins mainly derived from arachidonate ((5Z,8Z,11Z,14Z)-eicosatetraenoate, AA, C20:4(n-6)), with a particular role in the inflammatory response. The cyclooxygenase activity oxygenates AA to the hydroperoxy endoperoxide prostaglandin G2 (PGG2), and the peroxidase activity reduces PGG2 to the hydroxy endoperoxide prostaglandin H2 (PGH2), the precursor of all 2-series prostaglandins and thromboxanes. This complex transformation is initiated by abstraction of hydrogen at carbon 13 (with S-stereochemistry), followed by insertion of molecular O2 to form the endoperoxide bridge between carbon 9 and 11 that defines prostaglandins. The insertion of a second molecule of O2 (bis-oxygenase activity) yields a hydroperoxy group in PGG2 that is then reduced to PGH2 by two electrons. Involved in the constitutive production of prostanoids in particular in the stomach and platelets. In gastric epithelial cells, it is a key step in the generation of prostaglandins, such as prostaglandin E2 (PGE2), which plays an important role in cytoprotection. In platelets, it is involved in the generation of thromboxane A2 (TXA2), which promotes platelet activation and aggregation, vasoconstriction and proliferation of vascular smooth muscle cells. Can also use linoleate (LA, (9Z,12Z)-octadecadienoate, C18:2(n-6)) as substrate and produce hydroxyoctadecadienoates (HODEs) in a regio- and stereospecific manner, being (9R)-HODE ((9R)-hydroxy-(10E,12Z)-octadecadienoate) and (13S)-HODE ((13S)-hydroxy-(9Z,11E)-octadecadienoate) its major products. In Mus musculus (Mouse), this protein is Prostaglandin G/H synthase 1.